Here is a 316-residue protein sequence, read N- to C-terminus: Epoxide hydrolase 3 (316 aa).

An AB hydrolase-1 domain is found at 25 to 302; the sequence is PVVLLLHGFP…ACHFINQERP (278 aa). D101 serves as the catalytic Nucleophile. An an epoxide-binding site is contributed by Y150. Y230 (proton donor) is an active-site residue. H295 (proton acceptor) is an active-site residue.

This sequence belongs to the AB hydrolase superfamily. Epoxide hydrolase family. In terms of assembly, homodimer. As to expression, highly expressed in young fruits 15 days after anthesis (15-DAA).

The enzyme catalyses an epoxide + H2O = an ethanediol. It catalyses the reaction (24S)-24,25-epoxycucurbitadienol + H2O = (24R)-24,25-dihydroxycucurbitadienol. It participates in secondary metabolite biosynthesis; terpenoid biosynthesis. Functionally, epoxide hydrolase involved in the biosynthesis of cucurbitacin and mogroside tetracyclic triterpene natural products (e.g. siamenoside I and mogrosides IV, V and VI). Cucurbitacins have cytotoxic properties and exhibit deterrent taste as a defense barrier against herbivores. Mogrosides are nonsugar highly oxygenated compounds used as high-intensity zero-calorie sweeteners; they also possess pharmacological properties such as regulating immunity, lowering blood sugar and lipid levels, protecting the liver, and acting as antioxidants and antitumor agents. Catalyzes the hydrolysis of aromatic epoxide-containing substrates, such as the conversion of 24,25-epoxycucurbitadienol to 24,25-dihydroxycucurbitadienol. The protein is Epoxide hydrolase 3 of Siraitia grosvenorii (Monk's fruit).